The following is a 1083-amino-acid chain: Protein HOS4 (1083 aa).

2 disordered regions span residues 1–233 (MNET…RKLV) and 267–328 (SSLF…YRDS). Phosphoserine occurs at positions 14 and 16. Residues 24–62 (TRREELEKISKQETSEEEDTAGKHEQRETLSEEVSDKFP) are compositionally biased toward basic and acidic residues. Threonine 37 is modified (phosphothreonine). Position 67 is a phosphoserine (serine 67). The span at 67–85 (SFRSQTTSVHQATQNNLNA) shows a compositional bias: polar residues. Residues 86-118 (KESEDLAHKNDASSHEGEVNGDSRPDDVPETNE) are compositionally biased toward basic and acidic residues. A compositionally biased stretch (polar residues) spans 135-149 (PNVRNVDIQNHQPFS). Over residues 151-166 (DQLRAMLKEPKRKTVD) the composition is skewed to basic and acidic residues. The span at 167–185 (DFIEEEGLGAVEEEDLSDE) shows a compositional bias: acidic residues. Residues 186–207 (VLEKNTTEPENVEKDIEYSDSD) show a composition bias toward basic and acidic residues. The segment covering 277–293 (VKETNNNLSNMNSSPAQ) has biased composition (polar residues). Serine 290 is subject to Phosphoserine. Positions 300 to 310 (VSRSNDSNKSS) are enriched in low complexity. Residues 314–323 (VSKRPKQKKG) are compositionally biased toward basic residues. 3 ANK repeats span residues 329–359 (GGRT…DIND), 363–392 (AGNT…DVNI), and 398–427 (FGDT…DPTI). Residues 472 to 516 (AGIHNDKSKNGNNAHTIDQPPFDNTTKAKNEKAADSPSMASNIDE) form a disordered region. Positions 481–496 (NGNNAHTIDQPPFDNT) are enriched in polar residues. Serine 507 is modified (phosphoserine). ANK repeat units lie at residues 532–561 (AGKE…KIDL) and 593–622 (NKTS…DPTK). Disordered regions lie at residues 661-742 (HSED…DDNE) and 762-790 (DEEK…ISKI). Positions 665-675 (NNDDDDDDDNN) are enriched in acidic residues. A Phosphoserine modification is found at serine 698. Phosphothreonine is present on threonine 700. The span at 721–740 (NNDRDVKESTTSDSRKRLDD) shows a compositional bias: basic and acidic residues. Serine 778 carries the phosphoserine modification.

In terms of assembly, identified in the Set3C complex with HOS2, HST1, SNT1, SIF2, CPR1 and SET3.

In terms of biological role, unknown. Component of the Set3C complex, which is required to repress early/middle sporulation genes during meiosis. In Saccharomyces cerevisiae (strain ATCC 204508 / S288c) (Baker's yeast), this protein is Protein HOS4 (HOS4).